The sequence spans 522 residues: Maturase K (522 aa).

The protein belongs to the intron maturase 2 family. MatK subfamily.

It is found in the plastid. It localises to the chloroplast. Usually encoded in the trnK tRNA gene intron. Probably assists in splicing its own and other chloroplast group II introns. In Iris danfordiae (Danford iris), this protein is Maturase K.